Consider the following 632-residue polypeptide: tRNA uridine 5-carboxymethylaminomethyl modification enzyme MnmG (632 aa).

Residues 15–20 (GAGHAG), valine 127, and serine 182 each bind FAD. 276–290 (GARYCPSIEDKIVRF) provides a ligand contact to NAD(+). Residue glutamine 373 coordinates FAD.

Belongs to the MnmG family. As to quaternary structure, homodimer. Heterotetramer of two MnmE and two MnmG subunits. The cofactor is FAD.

Its subcellular location is the cytoplasm. Its function is as follows. NAD-binding protein involved in the addition of a carboxymethylaminomethyl (cmnm) group at the wobble position (U34) of certain tRNAs, forming tRNA-cmnm(5)s(2)U34. This Enterococcus faecalis (strain ATCC 700802 / V583) protein is tRNA uridine 5-carboxymethylaminomethyl modification enzyme MnmG.